Reading from the N-terminus, the 254-residue chain is Transcription factor bHLH51 (254 aa).

Residues 62 to 111 (SLSRSHRLAEKRRRDRINSHLTALRKLVPNSDKLDKAALLATVIEQVKEL) enclose the bHLH domain.

Homodimer. As to expression, expressed constitutively in roots, stems, and flowers.

It is found in the nucleus. In Arabidopsis thaliana (Mouse-ear cress), this protein is Transcription factor bHLH51 (BHLH51).